The following is a 208-amino-acid chain: Large ribosomal subunit protein uL4 (208 aa).

Positions 44–85 (RQGTKKTKTRAEVRGGGKKPWRQKGTGRARQGSIRAPHWRGG) are disordered. Residues 59-70 (GGKKPWRQKGTG) are compositionally biased toward basic residues.

It belongs to the universal ribosomal protein uL4 family. In terms of assembly, part of the 50S ribosomal subunit.

In terms of biological role, one of the primary rRNA binding proteins, this protein initially binds near the 5'-end of the 23S rRNA. It is important during the early stages of 50S assembly. It makes multiple contacts with different domains of the 23S rRNA in the assembled 50S subunit and ribosome. Forms part of the polypeptide exit tunnel. The polypeptide is Large ribosomal subunit protein uL4 (Mesoplasma florum (strain ATCC 33453 / NBRC 100688 / NCTC 11704 / L1) (Acholeplasma florum)).